The sequence spans 171 residues: Nicotinamide-nucleotide adenylyltransferase (171 aa).

The protein belongs to the archaeal NMN adenylyltransferase family.

The protein resides in the cytoplasm. It catalyses the reaction beta-nicotinamide D-ribonucleotide + ATP + H(+) = diphosphate + NAD(+). The protein operates within cofactor biosynthesis; NAD(+) biosynthesis; NAD(+) from nicotinamide D-ribonucleotide: step 1/1. The chain is Nicotinamide-nucleotide adenylyltransferase from Methanococcus maripaludis (strain C6 / ATCC BAA-1332).